We begin with the raw amino-acid sequence, 180 residues long: Large ribosomal subunit protein uL5 (180 aa).

It belongs to the universal ribosomal protein uL5 family. As to quaternary structure, part of the 50S ribosomal subunit; part of the 5S rRNA/L5/L18/L25 subcomplex. Contacts the 5S rRNA and the P site tRNA. Forms a bridge to the 30S subunit in the 70S ribosome.

Its function is as follows. This is one of the proteins that bind and probably mediate the attachment of the 5S RNA into the large ribosomal subunit, where it forms part of the central protuberance. In the 70S ribosome it contacts protein S13 of the 30S subunit (bridge B1b), connecting the 2 subunits; this bridge is implicated in subunit movement. Contacts the P site tRNA; the 5S rRNA and some of its associated proteins might help stabilize positioning of ribosome-bound tRNAs. The polypeptide is Large ribosomal subunit protein uL5 (Ligilactobacillus salivarius (strain UCC118) (Lactobacillus salivarius)).